Reading from the N-terminus, the 329-residue chain is Glycerol-3-phosphate dehydrogenase [NAD(P)+] (329 aa).

Residues W15, H35, and K107 each contribute to the NADPH site. The sn-glycerol 3-phosphate site is built by K107, G135, and S137. Residue A139 participates in NADPH binding. The sn-glycerol 3-phosphate site is built by K190, D243, S253, R254, and N255. The active-site Proton acceptor is K190. Residue R254 coordinates NADPH. L276 and E278 together coordinate NADPH.

Belongs to the NAD-dependent glycerol-3-phosphate dehydrogenase family.

The protein localises to the cytoplasm. The enzyme catalyses sn-glycerol 3-phosphate + NAD(+) = dihydroxyacetone phosphate + NADH + H(+). It carries out the reaction sn-glycerol 3-phosphate + NADP(+) = dihydroxyacetone phosphate + NADPH + H(+). The protein operates within membrane lipid metabolism; glycerophospholipid metabolism. Functionally, catalyzes the reduction of the glycolytic intermediate dihydroxyacetone phosphate (DHAP) to sn-glycerol 3-phosphate (G3P), the key precursor for phospholipid synthesis. This chain is Glycerol-3-phosphate dehydrogenase [NAD(P)+], found in Rhodopseudomonas palustris (strain BisB5).